The chain runs to 256 residues: Type III pantothenate kinase (256 aa).

Residue 6 to 13 (DVGNSHIY) participates in ATP binding. Residues Y99 and 106–109 (GADR) each bind substrate. D108 (proton acceptor) is an active-site residue. D129 is a K(+) binding site. T132 is an ATP binding site. Position 184 (T184) interacts with substrate.

The protein belongs to the type III pantothenate kinase family. As to quaternary structure, homodimer. NH4(+) is required as a cofactor. The cofactor is K(+).

Its subcellular location is the cytoplasm. It carries out the reaction (R)-pantothenate + ATP = (R)-4'-phosphopantothenate + ADP + H(+). The protein operates within cofactor biosynthesis; coenzyme A biosynthesis; CoA from (R)-pantothenate: step 1/5. Functionally, catalyzes the phosphorylation of pantothenate (Pan), the first step in CoA biosynthesis. This is Type III pantothenate kinase from Legionella pneumophila (strain Corby).